The chain runs to 507 residues: Glutamate--tRNA ligase (507 aa).

The 'HIGH' region motif lies at 14–24 (PSPTGPLHIGG). The short motif at 262 to 266 (KLSKR) is the 'KMSKS' region element. Lys265 contacts ATP.

The protein belongs to the class-I aminoacyl-tRNA synthetase family. Glutamate--tRNA ligase type 1 subfamily. In terms of assembly, monomer.

It is found in the cytoplasm. It carries out the reaction tRNA(Glu) + L-glutamate + ATP = L-glutamyl-tRNA(Glu) + AMP + diphosphate. In terms of biological role, catalyzes the attachment of glutamate to tRNA(Glu) in a two-step reaction: glutamate is first activated by ATP to form Glu-AMP and then transferred to the acceptor end of tRNA(Glu). The sequence is that of Glutamate--tRNA ligase from Porphyromonas gingivalis (strain ATCC 33277 / DSM 20709 / CIP 103683 / JCM 12257 / NCTC 11834 / 2561).